A 122-amino-acid polypeptide reads, in one-letter code: Large ribosomal subunit protein uL14 (122 aa).

This sequence belongs to the universal ribosomal protein uL14 family. In terms of assembly, part of the 50S ribosomal subunit. Forms a cluster with proteins L3 and L19. In the 70S ribosome, L14 and L19 interact and together make contacts with the 16S rRNA in bridges B5 and B8.

Binds to 23S rRNA. Forms part of two intersubunit bridges in the 70S ribosome. The sequence is that of Large ribosomal subunit protein uL14 from Teredinibacter turnerae (strain ATCC 39867 / T7901).